A 154-amino-acid chain; its full sequence is Avirulence protein ATR13 (154 aa).

Positions Met-1 to Gly-19 are cleaved as a signal peptide. Positions Arg-38–Arg-41 match the RxLR motif. Positions Leu-50–Ile-92 are leucine heptad repeat region. Residues Glu-93 to Lys-103 form a single repeat region region. Residues Asn-104–Gln-154 form a highly variable C-terminus domain region.

Belongs to the RxLR effector family.

The protein resides in the secreted. It localises to the host cytoplasm. Its function is as follows. Secreted effector that acts as an elicitor of hypersensitive response (HR) specifically on plants carrying defense protein RPP13. Recognition of ATR13 by RPP13 initiates defense responses that are effective against oomycete, bacterial and viral pathogens. The allele ATR13-Emco5 recognizes RPP13-Nd, the RPP13 defense protein from Arabidopsis thaliana ecotype Niederzenz. The polypeptide is Avirulence protein ATR13 (Hyaloperonospora arabidopsidis (Peronospora arabidopsidis)).